A 367-amino-acid chain; its full sequence is CCN family member 4 (367 aa).

The signal sequence occupies residues 1–22 (MRWLLPWTLAAVAVLRVGNILA). Residues 45–118 (RPEFCKWPCE…RYAIGVCAQV (74 aa)) form the IGFBP N-terminal domain. Intrachain disulfides connect Cys-49–Cys-73, Cys-53–Cys-75, Cys-55–Cys-76, and Cys-62–Cys-79. N-linked (GlcNAc...) asparagine glycosylation is present at Asn-86. 2 disulfides stabilise this stretch: Cys-87-Cys-101 and Cys-93-Cys-115. The region spanning 121 to 186 (VGCVLDGVRY…GQCCEQWVCD (66 aa)) is the VWFC domain. N-linked (GlcNAc...) asparagine glycosylation is present at Asn-143. The TSP type-1 domain maps to 215–260 (NCIAYTSPWSPCSTTCGLGISTRISNVNARCWPEQESRLCNLRPCD). Intrachain disulfides connect Cys-273-Cys-310, Cys-290-Cys-324, Cys-301-Cys-340, Cys-304-Cys-342, and Cys-309-Cys-346. The region spanning 273–347 (CLAVYQPEEA…NACFCNLSCR (75 aa)) is the CTCK domain. Asn-284 carries an N-linked (GlcNAc...) asparagine glycan. The N-linked (GlcNAc...) asparagine glycan is linked to Asn-343.

The protein belongs to the CCN family. Highly expressed in kidney and lung. Lower levels in heart, brain, spleen, liver, skeletal muscle and testis. Expressed in low metastatic melanoma cells.

It localises to the secreted. Its function is as follows. Downstream regulator in the Wnt/Frizzled-signaling pathway. Associated with cell survival. Adheres to skin and melanoma fibroblasts. In vitro binding to skin fibroblasts occurs through the proteoglycans, decorin and biglycan. Suppresses tumor growth in vivo. This chain is CCN family member 4 (Ccn4), found in Mus musculus (Mouse).